The chain runs to 198 residues: dTTP/UTP pyrophosphatase (198 aa).

Residue Asp-75 is the Proton acceptor of the active site.

It belongs to the Maf family. YhdE subfamily. A divalent metal cation serves as cofactor.

It is found in the cytoplasm. The enzyme catalyses dTTP + H2O = dTMP + diphosphate + H(+). It catalyses the reaction UTP + H2O = UMP + diphosphate + H(+). Functionally, nucleoside triphosphate pyrophosphatase that hydrolyzes dTTP and UTP. May have a dual role in cell division arrest and in preventing the incorporation of modified nucleotides into cellular nucleic acids. This Wolbachia pipientis wMel protein is dTTP/UTP pyrophosphatase.